We begin with the raw amino-acid sequence, 211 residues long: Interleukin-6 (211 aa).

An N-terminal signal peptide occupies residues methionine 1–alanine 25. A disulfide bridge links cysteine 71 with cysteine 77. Phosphoserine is present on serine 80. A disulfide bridge links cysteine 100 with cysteine 110.

The protein belongs to the IL-6 superfamily. As to quaternary structure, component of a hexamer of two molecules each of IL6, IL6R and IL6ST; first binds to IL6R to associate with the signaling subunit IL6ST. Interacts with IL6R (via the N-terminal ectodomain); this interaction may be affected by IL6R-binding with SORL1, hence decreasing IL6 cis signaling. Interacts with SORL1 (via the N-terminal ectodomain); this interaction leads to IL6 internalization and lysosomal degradation. May form a trimeric complex with the soluble SORL1 ectodomain and soluble IL6R receptor; this interaction might stabilize circulating IL6, hence promoting IL6 trans signaling.

The protein localises to the secreted. Its function is as follows. Cytokine with a wide variety of biological functions in immunity, tissue regeneration, and metabolism. Binds to IL6R, then the complex associates to the signaling subunit IL6ST/gp130 to trigger the intracellular IL6-signaling pathway. The interaction with the membrane-bound IL6R and IL6ST stimulates 'classic signaling', whereas the binding of IL6 and soluble IL6R to IL6ST stimulates 'trans-signaling'. Alternatively, 'cluster signaling' occurs when membrane-bound IL6:IL6R complexes on transmitter cells activate IL6ST receptors on neighboring receiver cells. Functionally, IL6 is a potent inducer of the acute phase response. Rapid production of IL6 contributes to host defense during infection and tissue injury, but excessive IL6 synthesis is involved in disease pathology. In the innate immune response, is synthesized by myeloid cells, such as macrophages and dendritic cells, upon recognition of pathogens through toll-like receptors (TLRs) at the site of infection or tissue injury. In the adaptive immune response, is required for the differentiation of B cells into immunoglobulin-secreting cells. Plays a major role in the differentiation of CD4(+) T cell subsets. Essential factor for the development of T follicular helper (Tfh) cells that are required for the induction of germinal-center formation. Required to drive naive CD4(+) T cells to the Th17 lineage. Also required for proliferation of myeloma cells and the survival of plasmablast cells. In terms of biological role, acts as an essential factor in bone homeostasis and on vessels directly or indirectly by induction of VEGF, resulting in increased angiogenesis activity and vascular permeability. Induces, through 'trans-signaling' and synergistically with IL1B and TNF, the production of VEGF. Involved in metabolic controls, is discharged into the bloodstream after muscle contraction increasing lipolysis and improving insulin resistance. 'Trans-signaling' in central nervous system also regulates energy and glucose homeostasis. Mediates, through GLP-1, crosstalk between insulin-sensitive tissues, intestinal L cells and pancreatic islets to adapt to changes in insulin demand. Also acts as a myokine. Plays a protective role during liver injury, being required for maintenance of tissue regeneration. Also has a pivotal role in iron metabolism by regulating HAMP/hepcidin expression upon inflammation or bacterial infection. Through activation of IL6ST-YAP-NOTCH pathway, induces inflammation-induced epithelial regeneration. The polypeptide is Interleukin-6 (IL6) (Lama glama (Llama)).